A 212-amino-acid chain; its full sequence is 2-hydroxychromene-2-carboxylate isomerase (212 aa).

Catalysis depends on S24, which acts as the Nucleophile. S24 is a binding site for glutathione. Substrate is bound by residues K56, 66–67 (NR), and Y97. Glutathione is bound by residues V181 and 192–195 (WGND).

It belongs to the GST superfamily. NadH family. It depends on glutathione as a cofactor.

It catalyses the reaction 2-hydroxychromene-2-carboxylate = (3E)-4-(2-hydroxyphenyl)-2-oxobut-3-enoate. It functions in the pathway aromatic compound metabolism; naphthalene degradation. Its function is as follows. Involved in the naphthalene catabolic pathway. Catalyzes the reversible glutathione-dependent isomerization of 2-hydroxychromene-2-carboxylate (HCCA) to trans-O-hydroxybenzylidenepyruvate (THBPA). In Pseudomonas sp. (strain C18), this protein is 2-hydroxychromene-2-carboxylate isomerase (doxJ).